The sequence spans 1316 residues: DNA-directed RNA polymerase subunit beta' (1316 aa).

Zn(2+) is bound by residues C60, C62, C75, and C78. Residues D535, D537, and D539 each contribute to the Mg(2+) site. 4 residues coordinate Zn(2+): C891, C968, C975, and C978.

It belongs to the RNA polymerase beta' chain family. The RNAP catalytic core consists of 2 alpha, 1 beta, 1 beta' and 1 omega subunit. When a sigma factor is associated with the core the holoenzyme is formed, which can initiate transcription. Requires Mg(2+) as cofactor. Zn(2+) is required as a cofactor.

It carries out the reaction RNA(n) + a ribonucleoside 5'-triphosphate = RNA(n+1) + diphosphate. DNA-dependent RNA polymerase catalyzes the transcription of DNA into RNA using the four ribonucleoside triphosphates as substrates. The protein is DNA-directed RNA polymerase subunit beta' of Mycobacterium bovis (strain BCG / Pasteur 1173P2).